The primary structure comprises 464 residues: Glutamate--tRNA ligase (464 aa).

Positions 9–19 (PSPTGYLHIGG) match the 'HIGH' region motif. Positions 242 to 246 (KISKR) match the 'KMSKS' region motif. Lys245 serves as a coordination point for ATP.

The protein belongs to the class-I aminoacyl-tRNA synthetase family. Glutamate--tRNA ligase type 1 subfamily. In terms of assembly, monomer.

It is found in the cytoplasm. It catalyses the reaction tRNA(Glu) + L-glutamate + ATP = L-glutamyl-tRNA(Glu) + AMP + diphosphate. In terms of biological role, catalyzes the attachment of glutamate to tRNA(Glu) in a two-step reaction: glutamate is first activated by ATP to form Glu-AMP and then transferred to the acceptor end of tRNA(Glu). The polypeptide is Glutamate--tRNA ligase (Neisseria meningitidis serogroup C / serotype 2a (strain ATCC 700532 / DSM 15464 / FAM18)).